A 174-amino-acid chain; its full sequence is MKLSNKTQALHDLIAPAVQACDVNLWGIEFIPQGKRSLLRIFIDKPVDETAEPVLNEDGETELGRGIGVQDCVRVTQQVGAILDVHDPISGEYALEVSSPGWDRPFFQLEQMSAYIGQQVALRLISAVENRRKFQAKLLLVDLENEMIQVEVDGKHVLEIDSHNIDKANLIYQD.

Belongs to the RimP family.

The protein localises to the cytoplasm. Functionally, required for maturation of 30S ribosomal subunits. The protein is Ribosome maturation factor RimP of Acinetobacter baylyi (strain ATCC 33305 / BD413 / ADP1).